The sequence spans 162 residues: Cytochrome c-type biogenesis protein CcmE (162 aa).

Residues 1 to 8 are Cytoplasmic-facing; it reads MNPRRKKR. Residues 9 to 29 traverse the membrane as a helical; Signal-anchor for type II membrane protein segment; the sequence is LTLAVALIGGVAAIASLLLYA. At 30–162 the chain is on the periplasmic side; that stretch reads LNSNLNLFYT…YSQQKAPDTK (133 aa). Residues His131 and Tyr135 each contribute to the heme site. Residues 139-162 form a disordered region; it reads EVAEAMGQKHEKLDYSQQKAPDTK. Positions 153–162 are enriched in polar residues; the sequence is YSQQKAPDTK.

This sequence belongs to the CcmE/CycJ family.

The protein resides in the cell inner membrane. Functionally, heme chaperone required for the biogenesis of c-type cytochromes. Transiently binds heme delivered by CcmC and transfers the heme to apo-cytochromes in a process facilitated by CcmF and CcmH. The protein is Cytochrome c-type biogenesis protein CcmE of Shewanella putrefaciens (strain CN-32 / ATCC BAA-453).